The primary structure comprises 247 residues: ATP synthase subunit a, chloroplastic (247 aa).

5 consecutive transmembrane segments (helical) span residues 38-58 (QVLI…VIAV), 95-115 (VPFI…GALL), 134-154 (INTT…AGLS), 199-219 (LVVV…VMFL), and 220-240 (GLFT…AYIG).

The protein belongs to the ATPase A chain family. As to quaternary structure, F-type ATPases have 2 components, CF(1) - the catalytic core - and CF(0) - the membrane proton channel. CF(1) has five subunits: alpha(3), beta(3), gamma(1), delta(1), epsilon(1). CF(0) has four main subunits: a, b, b' and c.

The protein resides in the plastid. It localises to the chloroplast thylakoid membrane. In terms of biological role, key component of the proton channel; it plays a direct role in the translocation of protons across the membrane. In Lolium perenne (Perennial ryegrass), this protein is ATP synthase subunit a, chloroplastic.